A 296-amino-acid polypeptide reads, in one-letter code: 4-hydroxybenzoate octaprenyltransferase (296 aa).

Helical transmembrane passes span 29-49 (IGIYLLLWPTLWALWVAAEGV), 55-75 (LFIFVFGVILMRAAGCVINDY), 102-122 (ALVLFAVLVTASFVLVLFTNA), 124-141 (TIWLSFGGLALAACYPFM), 146-166 (FYPQVVLGAAFSWGMPMAFTA), 169-189 (GSLPPEAWLLYIANLLWTVAY), 216-236 (ADRLIIASLQGLALLCLLLAG), 239-259 (FELGVWFHAGLLVAAACFVWE), and 271-291 (CFNAFLHNHWAGLAIFVGIVL).

Belongs to the UbiA prenyltransferase family. It depends on Mg(2+) as a cofactor.

Its subcellular location is the cell inner membrane. The catalysed reaction is all-trans-octaprenyl diphosphate + 4-hydroxybenzoate = 4-hydroxy-3-(all-trans-octaprenyl)benzoate + diphosphate. It functions in the pathway cofactor biosynthesis; ubiquinone biosynthesis. Its function is as follows. Catalyzes the prenylation of para-hydroxybenzoate (PHB) with an all-trans polyprenyl group. Mediates the second step in the final reaction sequence of ubiquinone-8 (UQ-8) biosynthesis, which is the condensation of the polyisoprenoid side chain with PHB, generating the first membrane-bound Q intermediate 3-octaprenyl-4-hydroxybenzoate. The protein is 4-hydroxybenzoate octaprenyltransferase of Ectopseudomonas mendocina (strain ymp) (Pseudomonas mendocina).